A 382-amino-acid chain; its full sequence is Glucose-1-phosphate adenylyltransferase (382 aa).

Residues tyrosine 100, glycine 165, 180–181 (EK), and serine 191 each bind alpha-D-glucose 1-phosphate.

The protein belongs to the bacterial/plant glucose-1-phosphate adenylyltransferase family. As to quaternary structure, homotetramer.

It catalyses the reaction alpha-D-glucose 1-phosphate + ATP + H(+) = ADP-alpha-D-glucose + diphosphate. It participates in glycan biosynthesis; glycogen biosynthesis. Functionally, involved in the biosynthesis of ADP-glucose, a building block required for the elongation reactions to produce glycogen. Catalyzes the reaction between ATP and alpha-D-glucose 1-phosphate (G1P) to produce pyrophosphate and ADP-Glc. The protein is Glucose-1-phosphate adenylyltransferase of Clostridium novyi (strain NT).